Consider the following 145-residue polypeptide: Protein SprT-like (145 aa).

A SprT-like domain is found at 5-140 (DYVREVSLAD…ACGRCHGRLI (136 aa)). H64 is a Zn(2+) binding site. The active site involves E65. Zn(2+) is bound at residue H68.

It belongs to the SprT family. Zn(2+) serves as cofactor.

The protein resides in the cytoplasm. This is Protein SprT-like from Streptococcus equi subsp. equi (strain 4047).